Consider the following 880-residue polypeptide: Lon protease (880 aa).

The tract at residues 1 to 37 (MADYNDKNYLLHMSGPDSDTGPGIENEDPRAVENPGH) is disordered. Over residues 27-37 (EDPRAVENPGH) the composition is skewed to basic and acidic residues. Positions 57 to 251 (LPILPVRDVV…LVNTQLQREV (195 aa)) constitute a Lon N-terminal domain. 404–411 (GPPGVGKT) lines the ATP pocket. Residues 640-821 (KLMPGMALGL…DELLPLVFEG (182 aa)) form the Lon proteolytic domain. Catalysis depends on residues serine 727 and lysine 770. Gly residues predominate over residues 826 to 836 (GGVSGAGQAGD). Positions 826 to 880 (GGVSGAGQAGDKGGKSKAAAGKKDVVAARPAKPAAPARRRKDKTEDELPTAEAGA) are disordered. Positions 852–861 (AARPAKPAAP) are enriched in low complexity.

This sequence belongs to the peptidase S16 family. In terms of assembly, homohexamer. Organized in a ring with a central cavity.

The protein localises to the cytoplasm. It carries out the reaction Hydrolysis of proteins in presence of ATP.. Its function is as follows. ATP-dependent serine protease that mediates the selective degradation of mutant and abnormal proteins as well as certain short-lived regulatory proteins. Required for cellular homeostasis and for survival from DNA damage and developmental changes induced by stress. Degrades polypeptides processively to yield small peptide fragments that are 5 to 10 amino acids long. Binds to DNA in a double-stranded, site-specific manner. The chain is Lon protease from Desulfovibrio desulfuricans (strain ATCC 27774 / DSM 6949 / MB).